Here is a 193-residue protein sequence, read N- to C-terminus: Small COPII coat GTPase SAR1 (193 aa).

Positions 3–5 (FLW) match the STAR; SAR1-N-terminal activation recruitment. Required for the activation and subsequent recruitment to ER membrane motif. Residues 11–15 (VLNML) form a mediates recruitment to ER membranes region. Aspartate 30 is a Mg(2+) binding site. GDP is bound by residues asparagine 31, alanine 32, glycine 33, lysine 34, threonine 35, and threonine 36. Asparagine 31 contributes to the GTP binding site. Residues glycine 33, lysine 34, threonine 35, and threonine 36 each contribute to the GTP site. Aspartate 71 lines the Mg(2+) pocket. Asparagine 130, lysine 131, aspartate 133, valine 176, and leucine 177 together coordinate GDP. GTP-binding residues include asparagine 130, lysine 131, aspartate 133, valine 176, and leucine 177.

Belongs to the small GTPase superfamily. SAR1 family. Homodimer; upon association with membrane. Part of the coat protein complex II/COPII, composed of SEC23/24 and SEC13/31 heterodimers, that it helps recruit and assemble on endoplasmic reticulum (ER) membranes at ER exit sites.

It localises to the endoplasmic reticulum membrane. The protein resides in the golgi apparatus. Its subcellular location is the golgi stack membrane. The protein localises to the cytoplasm. It is found in the cytosol. The catalysed reaction is GTP + H2O = GDP + phosphate + H(+). Small GTPases activation is mediated by guanine exchange factors (GEF), while inactivation through hydrolysis of the bound GTP is stimulated by GTPase activating proteins (GAP). Functionally, small GTPase that cycles between an active GTP-bound and an inactive GDP-bound state and mainly functions in vesicle-mediated endoplasmic reticulum (ER) to Golgi transport. The active GTP-bound form inserts into the endoplasmic reticulum membrane where it recruits the remainder of the coat protein complex II/COPII. The coat protein complex II assembling and polymerizing on endoplasmic reticulum membrane is responsible for both the sorting of cargos and the deformation and budding of membranes into vesicles destined to the Golgi. Plays a role in transporting the tyrosine kinase receptor let-23 from the endoplasmic reticulum to the plasma membrane of vulval precursor cells. The polypeptide is Small COPII coat GTPase SAR1 (Caenorhabditis elegans).